We begin with the raw amino-acid sequence, 636 residues long: Threonine--tRNA ligase (636 aa).

Residues 1–63 form the TGS domain; it reads MNEINVTLPD…ADGARVEIVT (63 aa). Residues 243–534 are catalytic; it reads DHRKLGRELD…LIEHFAGNFP (292 aa). Zn(2+) contacts are provided by C335, H386, and H511.

The protein belongs to the class-II aminoacyl-tRNA synthetase family. As to quaternary structure, homodimer. The cofactor is Zn(2+).

Its subcellular location is the cytoplasm. The enzyme catalyses tRNA(Thr) + L-threonine + ATP = L-threonyl-tRNA(Thr) + AMP + diphosphate + H(+). In terms of biological role, catalyzes the attachment of threonine to tRNA(Thr) in a two-step reaction: L-threonine is first activated by ATP to form Thr-AMP and then transferred to the acceptor end of tRNA(Thr). Also edits incorrectly charged L-seryl-tRNA(Thr). This Geobacter sp. (strain M21) protein is Threonine--tRNA ligase.